A 272-amino-acid chain; its full sequence is Alcohol dehydrogenase-related 31 kDa protein (272 aa).

11–34 (YVADCGGIALETSKVLMTKNIAKL) lines the NAD(+) pocket. Serine 139 is a binding site for substrate. The active-site Proton acceptor is the tyrosine 152.

The protein belongs to the short-chain dehydrogenases/reductases (SDR) family.

The chain is Alcohol dehydrogenase-related 31 kDa protein (Adhr) from Drosophila mauritiana (Fruit fly).